The sequence spans 304 residues: Acetylglutamate kinase (304 aa).

Residues 70–71 (GG), R92, and N196 contribute to the substrate site.

Belongs to the acetylglutamate kinase family. ArgB subfamily.

Its subcellular location is the cytoplasm. It carries out the reaction N-acetyl-L-glutamate + ATP = N-acetyl-L-glutamyl 5-phosphate + ADP. Its pathway is amino-acid biosynthesis; L-arginine biosynthesis; N(2)-acetyl-L-ornithine from L-glutamate: step 2/4. In terms of biological role, catalyzes the ATP-dependent phosphorylation of N-acetyl-L-glutamate. This chain is Acetylglutamate kinase, found in Methanococcoides burtonii (strain DSM 6242 / NBRC 107633 / OCM 468 / ACE-M).